Here is a 240-residue protein sequence, read N- to C-terminus: Ribonuclease PH (240 aa).

Residues arginine 87 and 125 to 127 (GTR) each bind phosphate.

This sequence belongs to the RNase PH family. In terms of assembly, homohexameric ring arranged as a trimer of dimers.

It catalyses the reaction tRNA(n+1) + phosphate = tRNA(n) + a ribonucleoside 5'-diphosphate. Functionally, phosphorolytic 3'-5' exoribonuclease that plays an important role in tRNA 3'-end maturation. Removes nucleotide residues following the 3'-CCA terminus of tRNAs; can also add nucleotides to the ends of RNA molecules by using nucleoside diphosphates as substrates, but this may not be physiologically important. Probably plays a role in initiation of 16S rRNA degradation (leading to ribosome degradation) during starvation. This chain is Ribonuclease PH, found in Pseudomonas fluorescens (strain Pf0-1).